Here is a 191-residue protein sequence, read N- to C-terminus: Calcium-activated potassium channel subunit beta-1 (191 aa).

Topologically, residues 1–15 (MGKKLVMAQKRGETR) are cytoplasmic. Residues 16 to 36 (ALCLGVAMVMCAVITYYILGT) form a helical membrane-spanning segment. Residues 37–157 (TMLPLYQKSV…YQRLYGPQAL (121 aa)) lie on the Extracellular side of the membrane. Residues Asn80 and Asn142 are each glycosylated (N-linked (GlcNAc...) asparagine). Residues 158–178 (LASLFWPTFLLTGGLLIIAMV) form a helical membrane-spanning segment. The Cytoplasmic segment spans residues 179–191 (KINRSLSILAAQK).

The protein belongs to the KCNMB (TC 8.A.14.1) family. KCNMB1 subfamily. As to quaternary structure, interacts with KCNMA1 tetramer. There are probably 4 molecules of KCMNB1 per KCNMA1 tetramer. N-glycosylated.

It is found in the membrane. Functionally, regulatory subunit of the calcium activated potassium KCNMA1 (maxiK) channel. Modulates the calcium sensitivity and gating kinetics of KCNMA1, thereby contributing to KCNMA1 channel diversity. Increases the apparent Ca(2+)/voltage sensitivity of the KCNMA1 channel. It also modifies KCNMA1 channel kinetics and alters its pharmacological properties. It slows down the activation and the deactivation kinetics of the channel. Acts as a negative regulator of smooth muscle contraction by enhancing the calcium sensitivity to KCNMA1. Its presence is also a requirement for internal binding of the KCNMA1 channel opener dehydrosoyasaponin I (DHS-1) triterpene glycoside and for external binding of the agonist hormone 17-beta-estradiol (E2). Increases the binding activity of charybdotoxin (CTX) toxin to KCNMA1 peptide blocker by increasing the CTX association rate and decreasing the dissociation rate. In Oryctolagus cuniculus (Rabbit), this protein is Calcium-activated potassium channel subunit beta-1 (KCNMB1).